The following is a 577-amino-acid chain: Urease subunit alpha (577 aa).

The 442-residue stretch at 136–577 folds into the Urease domain; it reads GGIDCHVHFI…LPMAQRYFLF (442 aa). Residues His141, His143, and Lys224 each coordinate Ni(2+). An N6-carboxylysine modification is found at Lys224. His226 is a substrate binding site. 2 residues coordinate Ni(2+): His253 and His279. His327 serves as the catalytic Proton donor. Ni(2+) is bound at residue Asp367.

It belongs to the metallo-dependent hydrolases superfamily. Urease alpha subunit family. As to quaternary structure, heterotrimer of UreA (gamma), UreB (beta) and UreC (alpha) subunits. Three heterotrimers associate to form the active enzyme. The cofactor is Ni cation. Carboxylation allows a single lysine to coordinate two nickel ions.

Its subcellular location is the cytoplasm. It catalyses the reaction urea + 2 H2O + H(+) = hydrogencarbonate + 2 NH4(+). It functions in the pathway nitrogen metabolism; urea degradation; CO(2) and NH(3) from urea (urease route): step 1/1. This is Urease subunit alpha from Mycobacteroides abscessus (strain ATCC 19977 / DSM 44196 / CCUG 20993 / CIP 104536 / JCM 13569 / NCTC 13031 / TMC 1543 / L948) (Mycobacterium abscessus).